We begin with the raw amino-acid sequence, 343 residues long: Polyprenal reductase 2 (343 aa).

The next 6 membrane-spanning stretches (helical) occupy residues glycine 12 to threonine 32, phenylalanine 66 to methionine 86, methionine 164 to cysteine 184, proline 223 to isoleucine 243, isoleucine 266 to valine 286, and leucine 291 to alanine 311.

It belongs to the steroid 5-alpha reductase family. Polyprenal reductase subfamily. Expressed in roots, leaves, stems and flowers.

Its subcellular location is the endoplasmic reticulum membrane. It catalyses the reaction a di-trans,poly-cis-dolichal + NADP(+) = a di-trans,poly-cis-polyprenal + NADPH + H(+). It functions in the pathway protein modification; protein glycosylation. Plays a key role in early steps of protein N-linked glycosylation by being involved in the conversion of polyprenol into dolichol. Acts as a polyprenal reductase that mediates the reduction of polyprenal into dolichal in a NADP-dependent mechanism. Dolichols are required for the synthesis of dolichol-linked monosaccharides and the oligosaccharide precursor used for N-glycosylation. Involved in the regulation of plant growth and reproductive processes. The sequence is that of Polyprenal reductase 2 from Arabidopsis thaliana (Mouse-ear cress).